A 201-amino-acid chain; its full sequence is 3-isopropylmalate dehydratase small subunit (201 aa).

The protein belongs to the LeuD family. LeuD type 1 subfamily. In terms of assembly, heterodimer of LeuC and LeuD.

It catalyses the reaction (2R,3S)-3-isopropylmalate = (2S)-2-isopropylmalate. It functions in the pathway amino-acid biosynthesis; L-leucine biosynthesis; L-leucine from 3-methyl-2-oxobutanoate: step 2/4. Its function is as follows. Catalyzes the isomerization between 2-isopropylmalate and 3-isopropylmalate, via the formation of 2-isopropylmaleate. The sequence is that of 3-isopropylmalate dehydratase small subunit from Roseobacter denitrificans (strain ATCC 33942 / OCh 114) (Erythrobacter sp. (strain OCh 114)).